The following is a 370-amino-acid chain: mRNA cap guanine-N(7) methyltransferase 1 (370 aa).

Residues 1–11 (MKRGFSDSPSS) are compositionally biased toward low complexity. Residues 1–34 (MKRGFSDSPSSSAPPPSSRFKSNPEGDSQFLEDE) are disordered. The 281-residue stretch at 61-341 (SPIIHLKKLN…LYLSFVLRKR (281 aa)) folds into the mRNA cap 0 methyltransferase domain. MRNA is bound at residue 70–71 (NN). S-adenosyl-L-methionine-binding positions include Lys-74, Ala-92, Asp-114, 150–151 (DC), and 172–174 (QFA).

The protein belongs to the class I-like SAM-binding methyltransferase superfamily. mRNA cap 0 methyltransferase family.

The protein localises to the nucleus. The catalysed reaction is a 5'-end (5'-triphosphoguanosine)-ribonucleoside in mRNA + S-adenosyl-L-methionine = a 5'-end (N(7)-methyl 5'-triphosphoguanosine)-ribonucleoside in mRNA + S-adenosyl-L-homocysteine. Its function is as follows. mRNA-capping methyltransferase that methylates the N7 position of the added guanosine to the 5'-cap structure of mRNAs. Binds RNA containing 5'-terminal GpppC. The chain is mRNA cap guanine-N(7) methyltransferase 1 from Arabidopsis thaliana (Mouse-ear cress).